The following is a 340-amino-acid chain: MANKNAYAQSGVDVEAGYEVVERIKKHVARTERAGVMGALGGFGGMFDLSKTGVKEPVLISGTDGVGTKLMLAIKYDKHDTIGQDCVAMCVNDIIAAGAEPLYFLDYVATGKNEPAKLEQVVAGVAEGCVQAGAALIGGETAEMPGMYGEDDYDLAGFAVGVAEKSQIIDGSKVVEGDVLLGLASSGIHSNGYSLVRRVFADYTGEEVLPELEGKKLKEVLLEPTRIYVKAVLPLIKEELVNGIAHITGGGFIENVPRMFADDLAAEIDESKVPVLPIFKTLEKYGQIKHEEMFEIFNMGVGLMLAVSPENVERVKELLDEAVYEIGRIVKKENESVIIK.

The protein belongs to the AIR synthase family.

The protein localises to the cytoplasm. The catalysed reaction is 2-formamido-N(1)-(5-O-phospho-beta-D-ribosyl)acetamidine + ATP = 5-amino-1-(5-phospho-beta-D-ribosyl)imidazole + ADP + phosphate + H(+). Its pathway is purine metabolism; IMP biosynthesis via de novo pathway; 5-amino-1-(5-phospho-D-ribosyl)imidazole from N(2)-formyl-N(1)-(5-phospho-D-ribosyl)glycinamide: step 2/2. In Streptococcus pneumoniae serotype 4 (strain ATCC BAA-334 / TIGR4), this protein is Phosphoribosylformylglycinamidine cyclo-ligase.